The chain runs to 432 residues: Zinc finger protein 829 (432 aa).

In terms of domain architecture, KRAB spans 35–106 (VMFRDVSIDF…DRELTRGLCS (72 aa)). The segment at 156 to 178 (WECKICGKTFNQNSQFIQHQRIH) adopts a C2H2-type 1 zinc-finger fold. The C2H2-type 2; degenerate zinc finger occupies 184–206 (YESKEYGKSFSRGSLVTRHQRIH). 8 consecutive C2H2-type zinc fingers follow at residues 212 to 234 (YECK…QRIH), 240 to 262 (YECK…QRIH), 268 to 290 (YECK…LRIH), 296 to 318 (YECK…QRMH), 324 to 346 (YECK…HRIH), 352 to 374 (YECE…QRIH), 380 to 402 (YECN…QRIH), and 408 to 430 (YDCK…EGIH).

The protein belongs to the krueppel C2H2-type zinc-finger protein family.

Its subcellular location is the nucleus. Its function is as follows. May be involved in transcriptional regulation. The chain is Zinc finger protein 829 (ZNF829) from Homo sapiens (Human).